The following is a 126-amino-acid chain: Large ribosomal subunit protein bL19 (126 aa).

Belongs to the bacterial ribosomal protein bL19 family.

In terms of biological role, this protein is located at the 30S-50S ribosomal subunit interface and may play a role in the structure and function of the aminoacyl-tRNA binding site. This is Large ribosomal subunit protein bL19 from Albidiferax ferrireducens (strain ATCC BAA-621 / DSM 15236 / T118) (Rhodoferax ferrireducens).